Reading from the N-terminus, the 301-residue chain is Homoserine O-acetyltransferase (301 aa).

Cys-142 (acyl-thioester intermediate) is an active-site residue. Substrate-binding residues include Lys-163 and Ser-192. The Proton acceptor role is filled by His-235. Glu-237 is an active-site residue. Arg-249 lines the substrate pocket.

Belongs to the MetA family.

It is found in the cytoplasm. The catalysed reaction is L-homoserine + acetyl-CoA = O-acetyl-L-homoserine + CoA. It functions in the pathway amino-acid biosynthesis; L-methionine biosynthesis via de novo pathway; O-acetyl-L-homoserine from L-homoserine: step 1/1. Its function is as follows. Transfers an acetyl group from acetyl-CoA to L-homoserine, forming acetyl-L-homoserine. This is Homoserine O-acetyltransferase from Bacillus cereus (strain AH187).